A 184-amino-acid polypeptide reads, in one-letter code: Leucine-rich repeat-containing protein 20 (184 aa).

LRR repeat units follow at residues 51 to 72 (QIHLITLANNELKSLTSKFMTT), 75 to 96 (QLRELHLEGNFLHRLPSEVSAL), 98 to 120 (HLKAIDLSRNQFQDFPEQLTALP), 121 to 141 (ALETINLEENEIVDVPVEKLA), and 145 to 167 (ALRSINLRFNPLNAEVRVIAPPL). S175 carries the post-translational modification Phosphoserine.

The chain is Leucine-rich repeat-containing protein 20 (LRRC20) from Homo sapiens (Human).